The chain runs to 986 residues: Resact receptor (986 aa).

Residues 1 to 21 form the signal peptide; it reads MATTRLLFLLVVAVMITMVRS. At 22–507 the chain is on the extracellular side; it reads ATLHYNPTVI…GELCTNWGLY (486 aa). N-linked (GlcNAc...) asparagine glycosylation is found at Asn-185, Asn-361, and Asn-410. Residues 508–528 form a helical membrane-spanning segment; sequence LGTLIPAFIIIFGGGLGYYIY. Topologically, residues 529-986 are cytoplasmic; it reads RKRAYEAALD…SHSCSALHSS (458 aa). Residues 568-836 enclose the Protein kinase domain; sequence LSAISVISNA…PNIIEVRTML (269 aa).

It localises to the membrane. The enzyme catalyses GTP = 3',5'-cyclic GMP + diphosphate. Functionally, implicated as a cell-surface receptor on spermatozoa for 'resact' a chemotactic peptide, and on various other cells as a receptor for atrial natriuretic peptide. The sequence is that of Resact receptor from Arbacia punctulata (Punctuate sea urchin).